A 496-amino-acid polypeptide reads, in one-letter code: MATEKTHQFHPSLHFVLFPFMAQGHMIPMIDIARLLAQRGVTITIVTTPHNAARFKNVLNRAIESGLAINILHVKFPYQEFGLPEGKENIDSLDSTELMVPFFKAVNLLEDPVMKLMEEMKPRPSCLISDWCLPYTSIIAKNFNIPKIVFHGMGCFNLLCMHVLRRNLEILENVKSDEEYFLVPSFPDRVEFTKLQLPVKANASGDWKEIMDEMVKAEYTSYGVIVNTFQELEPPYVKDYKEAMDGKVWSIGPVSLCNKAGADKAERGSKAAIDQDECLQWLDSKEEGSVLYVCLGSICNLPLSQLKELGLGLEESRRSFIWVIRGSEKYKELFEWMLESGFEERIKERGLLIKGWAPQVLILSHPSVGGFLTHCGWNSTLEGITSGIPLITWPLFGDQFCNQKLVVQVLKAGVSAGVEEVMKWGEEDKIGVLVDKEGVKKAVEELMGDSDDAKERRRRVKELGELAHKAVEKGGSSHSNITLLLQDIMQLAQFKN.

UDP-alpha-D-glucose-binding positions include Ser297, 357 to 359, 374 to 382, and 396 to 399; these read APQ, HCGWNSTLE, and FGDQ.

This sequence belongs to the UDP-glycosyltransferase family.

The polypeptide is UDP-glycosyltransferase 73C3 (UGT73C3) (Arabidopsis thaliana (Mouse-ear cress)).